The chain runs to 121 residues: MIYPQTMLTVADNTGAKKVMCIRVLGGNKKYAKIGDTIIAVVKEALPNMPVKRSDVVRAVVVRTKKSIRRQDGMYIRFDDNAAVIVNMDNNPRGTRVFGPVAREIRDKNYSKIVSLAPEVL.

Belongs to the universal ribosomal protein uL14 family. Part of the 50S ribosomal subunit.

It is found in the plastid. Its subcellular location is the chloroplast. In terms of biological role, binds to 23S rRNA. The polypeptide is Large ribosomal subunit protein uL14c (Phaeodactylum tricornutum (strain CCAP 1055/1)).